The following is a 368-amino-acid chain: Dual-specificity RNA methyltransferase RlmN (368 aa).

The active-site Proton acceptor is E94. Positions E100–D334 constitute a Radical SAM core domain. A disulfide bond links C107 and C339. Residues C114, C118, and C121 each coordinate [4Fe-4S] cluster. Residues G163–E164, S195, S217–H219, and N296 contribute to the S-adenosyl-L-methionine site. C339 acts as the S-methylcysteine intermediate in catalysis.

This sequence belongs to the radical SAM superfamily. RlmN family. [4Fe-4S] cluster is required as a cofactor.

It localises to the cytoplasm. The catalysed reaction is adenosine(2503) in 23S rRNA + 2 reduced [2Fe-2S]-[ferredoxin] + 2 S-adenosyl-L-methionine = 2-methyladenosine(2503) in 23S rRNA + 5'-deoxyadenosine + L-methionine + 2 oxidized [2Fe-2S]-[ferredoxin] + S-adenosyl-L-homocysteine. The enzyme catalyses adenosine(37) in tRNA + 2 reduced [2Fe-2S]-[ferredoxin] + 2 S-adenosyl-L-methionine = 2-methyladenosine(37) in tRNA + 5'-deoxyadenosine + L-methionine + 2 oxidized [2Fe-2S]-[ferredoxin] + S-adenosyl-L-homocysteine. In terms of biological role, specifically methylates position 2 of adenine 2503 in 23S rRNA and position 2 of adenine 37 in tRNAs. m2A2503 modification seems to play a crucial role in the proofreading step occurring at the peptidyl transferase center and thus would serve to optimize ribosomal fidelity. This is Dual-specificity RNA methyltransferase RlmN from Aeromonas salmonicida (strain A449).